The sequence spans 57 residues: Somatostatin-2 (57 aa).

Positions Gly1–Arg26 are disordered.

This sequence belongs to the somatostatin family.

It localises to the secreted. Somatostatin inhibits the release of somatotropin. The polypeptide is Somatostatin-2 (sst2) (Piaractus mesopotamicus (Small-scaled pacu)).